A 782-amino-acid polypeptide reads, in one-letter code: DnaJ homolog subfamily C member 16 (782 aa).

A signal peptide spans Met-1 to Ala-25. Residues Leu-26 to Glu-535 lie on the Cytoplasmic side of the membrane. The J domain occupies Asp-29–Gly-93. The 129-residue stretch at Phe-119–Pro-247 folds into the Thioredoxin domain. Residues Met-536–Val-556 traverse the membrane as a helical; Anchor for type IV membrane protein segment. Residues Gln-557 to Asp-782 lie on the Extracellular side of the membrane. A disordered region spans residues Ser-562 to Ser-593. A compositionally biased stretch (basic and acidic residues) spans Ser-563 to Lys-582. A compositionally biased stretch (polar residues) spans Thr-583–Ser-593. N-linked (GlcNAc...) asparagine glycosylation occurs at Asn-631.

Its subcellular location is the endoplasmic reticulum membrane. Functionally, plays an important role in regulating the size of autophagosomes during the formation process. In Pongo abelii (Sumatran orangutan), this protein is DnaJ homolog subfamily C member 16 (DNAJC16).